A 239-amino-acid chain; its full sequence is DNA repair protein RecO (239 aa).

This sequence belongs to the RecO family.

Its function is as follows. Involved in DNA repair and RecF pathway recombination. This chain is DNA repair protein RecO, found in Cereibacter sphaeroides (strain ATCC 17029 / ATH 2.4.9) (Rhodobacter sphaeroides).